A 107-amino-acid chain; its full sequence is Proteinase inhibitor 1 (107 aa).

The N-terminal stretch at 1 to 23 is a signal peptide; it reads MELKFAHIIVFFLLATSFETLMA. Positions 24–36 are excised as a propeptide; the sequence is RKESDGPEVIQLL.

This sequence belongs to the protease inhibitor I13 (potato type I serine protease inhibitor) family.

The protein is Proteinase inhibitor 1 of Solanum tuberosum (Potato).